The following is a 290-amino-acid chain: Acetyl-coenzyme A carboxylase carboxyl transferase subunit beta (290 aa).

One can recognise a CoA carboxyltransferase N-terminal domain in the interval 29-290 (LWGKCPECSQ…RLHGYREKRK (262 aa)). C33, C36, C52, and C55 together coordinate Zn(2+). Residues 33 to 55 (CPECSQVVYRKDLLENANVCSNC) form a C4-type zinc finger.

This sequence belongs to the AccD/PCCB family. As to quaternary structure, acetyl-CoA carboxylase is a heterohexamer composed of biotin carboxyl carrier protein (AccB), biotin carboxylase (AccC) and two subunits each of ACCase subunit alpha (AccA) and ACCase subunit beta (AccD). It depends on Zn(2+) as a cofactor.

The protein resides in the cytoplasm. The enzyme catalyses N(6)-carboxybiotinyl-L-lysyl-[protein] + acetyl-CoA = N(6)-biotinyl-L-lysyl-[protein] + malonyl-CoA. The protein operates within lipid metabolism; malonyl-CoA biosynthesis; malonyl-CoA from acetyl-CoA: step 1/1. In terms of biological role, component of the acetyl coenzyme A carboxylase (ACC) complex. Biotin carboxylase (BC) catalyzes the carboxylation of biotin on its carrier protein (BCCP) and then the CO(2) group is transferred by the transcarboxylase to acetyl-CoA to form malonyl-CoA. This is Acetyl-coenzyme A carboxylase carboxyl transferase subunit beta from Prochlorococcus marinus (strain MIT 9211).